A 224-amino-acid chain; its full sequence is Urease accessory protein UreF (224 aa).

Belongs to the UreF family. In terms of assembly, ureD, UreF and UreG form a complex that acts as a GTP-hydrolysis-dependent molecular chaperone, activating the urease apoprotein by helping to assemble the nickel containing metallocenter of UreC. The UreE protein probably delivers the nickel.

The protein resides in the cytoplasm. Required for maturation of urease via the functional incorporation of the urease nickel metallocenter. This Pseudomonas fluorescens (strain SBW25) protein is Urease accessory protein UreF.